We begin with the raw amino-acid sequence, 415 residues long: Homoserine O-succinyltransferase (415 aa).

Over residues methionine 1–arginine 26 the composition is skewed to polar residues. Residues methionine 1–proline 27 are disordered. The 316-residue stretch at asparagine 71 to aspartate 386 folds into the AB hydrolase-1 domain. Residue serine 177 is the Nucleophile of the active site. Arginine 247 contacts substrate. Active-site residues include aspartate 346 and histidine 379. Residue aspartate 380 participates in substrate binding.

Belongs to the AB hydrolase superfamily. MetX family. In terms of assembly, homodimer.

The protein localises to the cytoplasm. The enzyme catalyses L-homoserine + succinyl-CoA = O-succinyl-L-homoserine + CoA. Its pathway is amino-acid biosynthesis; L-methionine biosynthesis via de novo pathway; O-succinyl-L-homoserine from L-homoserine: step 1/1. Transfers a succinyl group from succinyl-CoA to L-homoserine, forming succinyl-L-homoserine. In Bordetella avium (strain 197N), this protein is Homoserine O-succinyltransferase.